The chain runs to 981 residues: Ephrin type-A receptor 3 (981 aa).

The N-terminal stretch at 1–20 (MALFRIYSFLAPFHILVLCQ) is a signal peptide. The Extracellular segment spans residues 21-545 (ALRNYPDNEV…LAVGDPNQQT (525 aa)). The Eph LBD domain maps to 29–210 (EVTLLDSMSA…FYKRCPLAVL (182 aa)). Fibronectin type-III domains lie at 328–441 (PPSA…TSQT) and 442–533 (VSVI…TSHE). N-linked (GlcNAc...) asparagine glycosylation is found at Asn340, Asn410, Asn435, and Asn485. A helical membrane pass occupies residues 546 to 566 (ILAISVAGGAVLLVLLVACFI). Residues 567–981 (VSGRRCGYIK…QAHHGTQVQV (415 aa)) lie on the Cytoplasmic side of the membrane. Residues Tyr601 and Tyr607 each carry the phosphotyrosine; by autocatalysis modification. The 262-residue stretch at 626-887 (IRIERVIGAG…QIVNTLDRLI (262 aa)) folds into the Protein kinase domain. Residues 633–638 (GAGEFG), Lys658, and 705–711 (EYMENGS) each bind ATP. The residue at position 706 (Tyr706) is a Phosphotyrosine; by autocatalysis. Asp751 acts as the Proton acceptor in catalysis. Residue 755–756 (RN) coordinates ATP. 2 positions are modified to phosphotyrosine; by autocatalysis: Tyr784 and Tyr927. One can recognise an SAM domain in the interval 910-974 (AAVNTVEDWL…LSSIQCLQAH (65 aa)). A PDZ-binding motif is present at residues 979-981 (VQV).

The protein belongs to the protein kinase superfamily. Tyr protein kinase family. Ephrin receptor subfamily. Heterotetramer upon binding of the ligand. The heterotetramer is composed of an ephrin dimer and a receptor dimer. Oligomerization is probably required to induce biological responses. Autophosphorylates upon activation by efna5. Widely expressed in the developing zebrafish nervous system.

It is found in the cell membrane. It catalyses the reaction L-tyrosyl-[protein] + ATP = O-phospho-L-tyrosyl-[protein] + ADP + H(+). In terms of biological role, receptor tyrosine kinase which binds promiscuously membrane-bound ephrin family ligands residing on adjacent cells, leading to contact-dependent bidirectional signaling into neighboring cells. The signaling pathway downstream of the receptor is referred to as forward signaling while the signaling pathway downstream of the ephrin ligand is referred to as reverse signaling. Highly promiscuous for ephrin-A ligands it binds preferentially efna5. Upon activation by efna5 regulates cell-cell adhesion, cytoskeletal organization and cell migration. Plays a role in cardiac cells migration and differentiation probably through activation by efna1. Involved in the retinotectal mapping of neurons. May also control the segregation but not the guidance of motor and sensory axons during neuromuscular circuit development. This Danio rerio (Zebrafish) protein is Ephrin type-A receptor 3 (epha3).